Consider the following 318-residue polypeptide: Vomeronasal type-1 receptor A11 (318 aa).

The Extracellular portion of the chain corresponds to 1–32; the sequence is MSEILFFSPQPLFSHMMNKNSRLHTHSNIKNT. A helical transmembrane segment spans residues 33-53; the sequence is FFSEIGIGISGNSFLLLFHIL. At 54–65 the chain is on the cytoplasmic side; it reads KFIRGHRPRLTD. The helical transmembrane segment at 66–86 threads the bilayer; the sequence is LPIGLLSLIHLLMLLLMAFIA. The Extracellular portion of the chain corresponds to 87–101; the sequence is TDIFISRRGWDGIIC. Cysteine 101 and cysteine 188 are oxidised to a cystine. Residues 102 to 118 traverse the membrane as a helical segment; sequence KFLVYLYGVLRGLSLCT. Residues 119-147 lie on the Cytoplasmic side of the membrane; sequence TSMLSVLQAIILSPRSSCLAKLKHKSPHH. The chain crosses the membrane as a helical span at residues 148-168; the sequence is ISCAIIFLSVLYMLISSHILL. At 169-206 the chain is on the extracellular side; that stretch reads SITATPNLTMNDFLYVSQSCSLLPLSYLVQSMYSTLLA. A glycan (N-linked (GlcNAc...) asparagine) is linked at asparagine 175. Residues 207–227 traverse the membrane as a helical segment; it reads LREVFLISLMVLSTLYMVVLL. Topologically, residues 228 to 254 are cytoplasmic; it reads CRHRKQAQHLQGTSLSPKASAEQRATQ. A helical membrane pass occupies residues 255-275; that stretch reads TILMLMTFFVLMSIFDSIVSC. Topologically, residues 276–285 are extracellular; the sequence is SRTMFLDDPT. Residues 286–306 form a helical membrane-spanning segment; that stretch reads SYSIHIFVMHIYATVSPFVFM. Over 307-318 the chain is Cytoplasmic; that stretch reads STEKHIVNILRG.

It belongs to the G-protein coupled receptor 1 family.

The protein resides in the cell membrane. Its function is as follows. Putative pheromone receptor implicated in the regulation of social and reproductive behavior. In Mus musculus (Mouse), this protein is Vomeronasal type-1 receptor A11.